The primary structure comprises 241 residues: Small ribosomal subunit protein bS6 (241 aa).

The span at 97–108 (KPKIRERNRKYT) shows a compositional bias: basic residues. 2 disordered regions span residues 97–187 (KPKI…HREN) and 199–241 (NKNH…QSSN). Residues 109–118 (PRRDRFDKPN) are compositionally biased toward basic and acidic residues. Low complexity-rich tracts occupy residues 130–151 (QDQQ…QTSQ), 161–180 (DDFQ…QQNQ), and 199–210 (NKNHQNQTSQTQ).

It belongs to the bacterial ribosomal protein bS6 family.

Functionally, binds together with bS18 to 16S ribosomal RNA. The protein is Small ribosomal subunit protein bS6 of Mesomycoplasma hyopneumoniae (strain 7448) (Mycoplasma hyopneumoniae).